A 491-amino-acid polypeptide reads, in one-letter code: UDP-N-acetylmuramate--L-alanine ligase (491 aa).

126 to 132 serves as a coordination point for ATP; that stretch reads GTHGKTT.

The protein belongs to the MurCDEF family.

The protein localises to the cytoplasm. It carries out the reaction UDP-N-acetyl-alpha-D-muramate + L-alanine + ATP = UDP-N-acetyl-alpha-D-muramoyl-L-alanine + ADP + phosphate + H(+). Its pathway is cell wall biogenesis; peptidoglycan biosynthesis. Its function is as follows. Cell wall formation. This is UDP-N-acetylmuramate--L-alanine ligase from Salmonella paratyphi A (strain ATCC 9150 / SARB42).